The primary structure comprises 225 residues: Octanoyltransferase (225 aa).

Residues 44-219 (RETPDEIWLL…NFIAQLTHRI (176 aa)) enclose the BPL/LPL catalytic domain. Residues 83–90 (RGGQITYH), 150–152 (SLG), and 163–165 (GIA) contribute to the substrate site. The active-site Acyl-thioester intermediate is the Cys-181.

It belongs to the LipB family.

It localises to the cytoplasm. The catalysed reaction is octanoyl-[ACP] + L-lysyl-[protein] = N(6)-octanoyl-L-lysyl-[protein] + holo-[ACP] + H(+). The protein operates within protein modification; protein lipoylation via endogenous pathway; protein N(6)-(lipoyl)lysine from octanoyl-[acyl-carrier-protein]: step 1/2. Its function is as follows. Catalyzes the transfer of endogenously produced octanoic acid from octanoyl-acyl-carrier-protein onto the lipoyl domains of lipoate-dependent enzymes. Lipoyl-ACP can also act as a substrate although octanoyl-ACP is likely to be the physiological substrate. In Nitrosomonas eutropha (strain DSM 101675 / C91 / Nm57), this protein is Octanoyltransferase.